The following is a 173-amino-acid chain: MAPLLKLLDSSLRVSVIPLSAATIWLTVTNHQDNSSYGNLKYSNIMGLKYMVCISAICASYAFVAAVSIWIKCLVNKVWLFFVSDQIIAYLMVTSVAAAMEILYIAYNGDQKVTWSEACTSYGKFCNGMKTALILHALTLCFFIVLAVISAYRAFSMYQPPVSSKETVEGDAT.

The Cytoplasmic portion of the chain corresponds to 1-9 (MAPLLKLLD). Residues 10-29 (SSLRVSVIPLSAATIWLTVT) form a helical membrane-spanning segment. At 30–50 (NHQDNSSYGNLKYSNIMGLKY) the chain is on the extracellular side. A glycan (N-linked (GlcNAc...) asparagine) is linked at Asn-34. The chain crosses the membrane as a helical span at residues 51–71 (MVCISAICASYAFVAAVSIWI). The Cytoplasmic portion of the chain corresponds to 72 to 86 (KCLVNKVWLFFVSDQ). A helical membrane pass occupies residues 87–107 (IIAYLMVTSVAAAMEILYIAY). Residues 108-131 (NGDQKVTWSEACTSYGKFCNGMKT) lie on the Extracellular side of the membrane. A helical transmembrane segment spans residues 132–152 (ALILHALTLCFFIVLAVISAY). At 153–173 (RAFSMYQPPVSSKETVEGDAT) the chain is on the cytoplasmic side.

Belongs to the Casparian strip membrane proteins (CASP) family. As to quaternary structure, homodimer and heterodimers.

The protein resides in the cell membrane. The sequence is that of CASP-like protein 2D1 from Ricinus communis (Castor bean).